The chain runs to 1125 residues: Transient receptor potential cation channel subfamily A member 1 (1125 aa).

The Cytoplasmic segment spans residues 1–721 (MKRGLRRILL…KWCAYGFRAH (721 aa)). 9 ANK repeats span residues 63 to 94 (ENLC…VLNI), 98 to 127 (YGNT…NPNL), 131 to 161 (NMMS…NINL), 165 to 194 (NGNT…KLCK), 198 to 227 (WGDY…KNGY), 239 to 268 (KKAS…HIDM), 272 to 301 (AKCM…GSSD), 309 to 338 (NQET…DINS), and 342 to 371 (EGRS…KVDI). 5 cysteine pairs are disulfide-bonded: Cys193-Cys666, Cys463-Cys666, Cys609-Cys622, Cys622-Cys666, and Cys634-Cys859. Residue Pro395 is modified to 4-hydroxyproline; transient. ANK repeat units lie at residues 413-442 (DGCT…SIHS), 446-475 (DKKS…DTRL), 482-511 (HGMT…LFLS), 514-543 (NGWT…KCTD), and 548-577 (EGNT…DILL). 2 residues coordinate (E)-cinnamaldehyde: Cys415 and Cys422. Cys622 provides a ligand contact to (E)-cinnamaldehyde. Cys634 carries the post-translational modification Cysteine sulfenic acid (-SOH); transient; in hyperoxia. 3 residues coordinate (E)-cinnamaldehyde: Cys642, Cys666, and Lys712. The helical transmembrane segment at 722 to 742 (MMNLGSYCLGLIPMTLLVVKI) threads the bilayer. Topologically, residues 743–767 (QPGMAFNSTGIINGTSSTHEERIDT) are extracellular. N-linked (GlcNAc...) asparagine glycans are attached at residues Asn749 and Asn755. A helical membrane pass occupies residues 768–788 (LNSFPIKICMILVFLSSIFGY). The Cytoplasmic portion of the chain corresponds to 789 to 806 (CKEVIQIFQQKRNYFLDY). Ca(2+) is bound by residues Glu791, Gln794, Asn808, and Glu811. Residues 807-827 (NNALEWVIYTTSIIFVLPLFL) form a helical membrane-spanning segment. Topologically, residues 828–832 (NIPAY) are extracellular. The chain crosses the membrane as a helical span at residues 833–853 (MQWQCGAIAIFFYWMNFLLYL). At 854–876 (QRFENCGIFIVMLEVIFKTLLRS) the chain is on the cytoplasmic side. Position 859 is a cysteine sulfenic acid (-SOH); transient; in hyperoxia (Cys859). The chain crosses the membrane as a helical span at residues 877-897 (TGVFIFLLLAFGLSFYVLLNF). At 898–904 (QDAFSTP) the chain is on the extracellular side. The pore-forming intramembrane region spans 905–925 (LLSLIQTFSMMLGDINYRDAF). Topologically, residues 926–937 (LEPLFRNELAYP) are extracellular. The helical transmembrane segment at 938-959 (VLTFGQLIAFTMFVPIVLMNLL) threads the bilayer. Residues 960 to 1125 (IGLAVGDIAE…THCSISHPDF (166 aa)) lie on the Cytoplasmic side of the membrane. Residues 1044 to 1073 (MEILKQKYRLKDLTSLLEKQHELIKLIIQK) adopt a coiled-coil conformation. 1048–1054 (KQKYRLK) contributes to the a 1,2-diacyl-sn-glycero-3-phospho-(1D-myo-inositol) binding site.

This sequence belongs to the transient receptor (TC 1.A.4) family. As to quaternary structure, homotetramer. Interacts with TMEM100. Interacts with EGLN1. Interacts with the scorpion wasabi receptor toxin at the same site that electrophiles but in a non-covalent manner. Post-translationally, TRPA1 activation by electrophiles occurs though covalent modification of specific cysteine residues in the N-terminal cytoplasmic domain. In terms of processing, hydroxylation is required for TRPA1 activity inhibition in normoxia. In hypoxia, the decrease in oxygen concentration diminishes the activity of the hydroxylase EGLN1, thus relieving TRPA1 from inhibition and ultimately leading to channel activation. Oxidation of Cys-634 and Cys-859 in hyperoxia may override the hydroxylase EGLN1-mediated inhibition, causing TRPA1 activation. Expressed in inner ear (at protein level). Specifically expressed in a subset of nociceptive neurons. Expressed in the same neurons that TRPV1. In contrast, it is not expressed in neurons expressing TRPM8. Expressed in the superior cervical ganglion of vagus nerve. Expressed in the inferior ganglion (nodose ganglion) of vagus nerve. Expressed in dorsal root ganglia neurons.

It localises to the cell membrane. It carries out the reaction Ca(2+)(in) = Ca(2+)(out). The enzyme catalyses Mg(2+)(in) = Mg(2+)(out). The catalysed reaction is Na(+)(in) = Na(+)(out). It catalyses the reaction K(+)(in) = K(+)(out). It carries out the reaction Zn(2+)(in) = Zn(2+)(out). Electrophilic ligands activate the channel by covalent modification of intracellular cysteines. Cys-622 plays a key role in covalent binding of electrophiles. Extracellular Ca(2+) both potentiates and inactivates TRPA1; a rapid potentiation follows by slow desensitization. Activated by increase in intracellular Ca(2+) concentration. Inhibited by the potent blocker of TRPV channels ruthenium red, A-967079. Activated by icilin, sulfhydryl reactive agent MTSEA, N-methyl maleimide (NMM), and PF-4840154. Also activated by hyperoxia. Activated by intracellular Zn(2+). TRPA1 activation may critically depend on the presence of small intracellular compounds such as polyphosphates. In terms of biological role, ligand-activated Ca(2+)-permeable, nonselective cation channel. Involved in pain detection and possibly also in cold perception, oxygen concentration perception, cough, itch, and inner ear function. Has a relatively high Ca(2+) selectivity, with a preference for divalent over monovalent cations (Ca(2+) &gt; Ba(2+) &gt; Mg(2+) &gt; NH4(+) &gt; Li(+) &gt; K(+)), the influx of cation into the cytoplasm, leads to membrane depolarization. Has a central role in the pain response to endogenous inflammatory mediators, such as bradykinin and to a diverse array of irritants. Activated by a large variety of structurally unrelated electrophilic and non-electrophilic chemical compounds, such as allylthiocyanate (AITC) from mustard oil or wasabi, cinnamaldehyde, diallyl disulfide (DADS) from garlic, and acrolein, an environmental irritant. Electrophilic ligands activate TRPA1 by interacting with critical N-terminal Cys residues in a covalent manner. Non-electrophile agonists bind at distinct sites in the transmembrane domain to promote channel activation. Also acts as an ionotropic cannabinoid receptor by being activated by delta(9)-tetrahydrocannabinol (THC), the psychoactive component of marijuana. May be a component for the mechanosensitive transduction channel of hair cells in inner ear, thereby participating in the perception of sounds. This Mus musculus (Mouse) protein is Transient receptor potential cation channel subfamily A member 1.